A 541-amino-acid chain; its full sequence is MHRRNLLKASMAIAAYTGLSASGLLAAQAWAGNRAADGKAVAFDFESLKAQAKQLAGTAYKDTRQVLPPTLATMTPQNFNAIGYDGNHSLWKELNGQLDVQFFHVGMGFKTPVRMHSVDPKTREAREVHFRPSLFNYEKTTVDTKQLTGDLGFSGFKLFKAPELDRHDVLSFLGASYFRAVDSTGQYGLSARGLAIDTYAKKREEFPDFTQFWFETPDKNATRFVVYALLDSPSATGAYRFDIDCQANQVVMAIDAHINARTTIEQLGIAPMTSMFSCGTHERRMCDTIHPQIHDSDRLAMWRGNGEWICRPLNNPAKLQFNAFADTDPKGFGLVQTDHEFASYQDTVDWYSKRPSLWVEPTTAWGEGSIDLLEIPTTGETLDNIVAFWTPKKPVAAGDSLNYGYKLYWSALPPVSTPLAQVDATRSGMGGFTEGWAPGEHYPEVWARRFAVDFKGGGLDRLPAGTGIEPVVTCSHGEVKDFSVLVLDNIKGYRILFDWYPTSDSVEPVELRLFIRTQDRTLSETWLYQYFPPAPEARKYT.

Residues 1–29 constitute a signal peptide (tat-type signal); that stretch reads MHRRNLLKASMAIAAYTGLSASGLLAAQA.

The protein belongs to the OpgD/OpgG family. In terms of processing, predicted to be exported by the Tat system. The position of the signal peptide cleavage has not been experimentally proven.

It localises to the periplasm. It functions in the pathway glycan metabolism; osmoregulated periplasmic glucan (OPG) biosynthesis. Functionally, probably involved in the control of the structural glucose backbone of osmoregulated periplasmic glucans (OPGs). This chain is Glucans biosynthesis protein D, found in Pseudomonas fluorescens (strain SBW25).